The sequence spans 918 residues: Aconitase-ribosomal protein bL21m fusion protein (918 aa).

A mitochondrion-targeting transit peptide spans 1 to 30 (MATFARMKLCLSGSSQAIPSKGISLVAARF). Residues 31-811 (QSTASRASYV…IDSIKQQPDH (781 aa)) are homocitrate dehydratase, mitochondrial. Substrate-binding positions include glutamine 105 and 198-200 (DSH). 3 residues coordinate [4Fe-4S] cluster: cysteine 394, cysteine 457, and cysteine 460. Residues arginine 484, arginine 489, lysine 619, and 680 to 681 (AR) each bind substrate. Positions 812–918 (YADAYIFNRH…ILRVTELKLN (107 aa)) are large ribosomal subunit protein bL21m.

In the N-terminal section; belongs to the aconitase/IPM isomerase family. This sequence in the C-terminal section; belongs to the bacterial ribosomal protein bL21 family. As to quaternary structure, component of the mitochondrial large ribosomal subunit (mt-LSU). Mature yeast 74S mitochondrial ribosomes consist of a small (37S) and a large (54S) subunit. The 37S small subunit contains a 15S ribosomal RNA (15S mt-rRNA) and at least 32 different proteins. The 54S large subunit contains a 21S rRNA (21S mt-rRNA) and at least 45 different proteins. Requires [4Fe-4S] cluster as cofactor.

Its subcellular location is the mitochondrion. The protein resides in the nucleus. The catalysed reaction is (2R)-homocitrate = cis-homoaconitate + H2O. Its pathway is amino-acid biosynthesis; L-lysine biosynthesis via AAA pathway; L-alpha-aminoadipate from 2-oxoglutarate: step 2/5. Catalyzes the reversible dehydration of (R)-homocitrate to cis-homoaconitate, a step in the alpha-aminoadipate pathway for lysine biosynthesis. Functionally, component of the mitochondrial ribosome (mitoribosome), a dedicated translation machinery responsible for the synthesis of mitochondrial genome-encoded proteins, including at least some of the essential transmembrane subunits of the mitochondrial respiratory chain. The mitoribosomes are attached to the mitochondrial inner membrane and translation products are cotranslationally integrated into the membrane. This chain is Aconitase-ribosomal protein bL21m fusion protein (aco2), found in Schizosaccharomyces pombe (strain 972 / ATCC 24843) (Fission yeast).